Reading from the N-terminus, the 382-residue chain is Anhydro-N-acetylmuramic acid kinase (382 aa).

9-16 (GTSLDGID) provides a ligand contact to ATP.

The protein belongs to the anhydro-N-acetylmuramic acid kinase family.

It catalyses the reaction 1,6-anhydro-N-acetyl-beta-muramate + ATP + H2O = N-acetyl-D-muramate 6-phosphate + ADP + H(+). It participates in amino-sugar metabolism; 1,6-anhydro-N-acetylmuramate degradation. It functions in the pathway cell wall biogenesis; peptidoglycan recycling. In terms of biological role, catalyzes the specific phosphorylation of 1,6-anhydro-N-acetylmuramic acid (anhMurNAc) with the simultaneous cleavage of the 1,6-anhydro ring, generating MurNAc-6-P. Is required for the utilization of anhMurNAc either imported from the medium or derived from its own cell wall murein, and thus plays a role in cell wall recycling. The sequence is that of Anhydro-N-acetylmuramic acid kinase from Bacillus cereus (strain ZK / E33L).